The chain runs to 151 residues: S-protein homolog 74 (151 aa).

The first 25 residues, 1–25 (MNYIKQFILAICFYLVLTCQDHVLA), serve as a signal peptide directing secretion.

Belongs to the plant self-incompatibility (S1) protein family.

It localises to the secreted. The polypeptide is S-protein homolog 74 (Arabidopsis thaliana (Mouse-ear cress)).